We begin with the raw amino-acid sequence, 861 residues long: DNA mismatch repair protein MutS (861 aa).

614–621 (GPNMGGKS) contributes to the ATP binding site.

Belongs to the DNA mismatch repair MutS family.

Its function is as follows. This protein is involved in the repair of mismatches in DNA. It is possible that it carries out the mismatch recognition step. This protein has a weak ATPase activity. The chain is DNA mismatch repair protein MutS from Mannheimia succiniciproducens (strain KCTC 0769BP / MBEL55E).